The following is a 465-amino-acid chain: Cysteine--tRNA ligase (465 aa).

Cys27 is a Zn(2+) binding site. Residues 29–39 carry the 'HIGH' region motif; that stretch reads PTVYNYIHIGN. Residues Cys207, His232, and Glu236 each coordinate Zn(2+). Positions 264-268 match the 'KMSKS' region motif; it reads KMSKS. Lys267 contacts ATP.

This sequence belongs to the class-I aminoacyl-tRNA synthetase family. As to quaternary structure, monomer. The cofactor is Zn(2+).

The protein localises to the cytoplasm. The enzyme catalyses tRNA(Cys) + L-cysteine + ATP = L-cysteinyl-tRNA(Cys) + AMP + diphosphate. The polypeptide is Cysteine--tRNA ligase (Clostridioides difficile (strain 630) (Peptoclostridium difficile)).